The sequence spans 448 residues: Putative RNA-ligase (448 aa).

The protein belongs to the asfivirus M448R family.

It is found in the virion. The sequence is that of Putative RNA-ligase from Ornithodoros (relapsing fever ticks).